The chain runs to 124 residues: Small ribosomal subunit protein uS13 (124 aa).

Positions 95 to 124 (GLPVRGQRTKTNARTRKGPKRTIAGKKKAK) are disordered.

This sequence belongs to the universal ribosomal protein uS13 family. In terms of assembly, part of the 30S ribosomal subunit. Forms a loose heterodimer with protein S19. Forms two bridges to the 50S subunit in the 70S ribosome.

Located at the top of the head of the 30S subunit, it contacts several helices of the 16S rRNA. In the 70S ribosome it contacts the 23S rRNA (bridge B1a) and protein L5 of the 50S subunit (bridge B1b), connecting the 2 subunits; these bridges are implicated in subunit movement. Contacts the tRNAs in the A and P-sites. The chain is Small ribosomal subunit protein uS13 from Rhodococcus erythropolis (strain PR4 / NBRC 100887).